Here is a 1009-residue protein sequence, read N- to C-terminus: Type VII secretion system accessory factor EsaA (1009 aa).

A helical membrane pass occupies residues 7 to 27 (IYALIVTLIIIIAIVSMIFFV). Basic and acidic residues predominate over residues 680-697 (TFAEEPQEPKIDKGKNDE). The segment at 680–707 (TFAEEPQEPKIDKGKNDEFNTMSSNLDK) is disordered. Transmembrane regions (helical) follow at residues 822 to 842 (ISPT…AYIF), 869 to 889 (VITS…VGLI), 903 to 923 (KFIL…TYLL), 928 to 948 (SIGM…MNNL), and 979 to 999 (IGLV…LNMF).

The protein belongs to the EsaA family. As to quaternary structure, homodimer. Interacts with EssB.

Its subcellular location is the cell membrane. Component of the type VII secretion system (Ess). Provides together with EssB and other components such as EssC and EssE a secretion platform across the cytoplasmic membrane in the host. The chain is Type VII secretion system accessory factor EsaA from Staphylococcus aureus (strain COL).